Consider the following 210-residue polypeptide: Na(+)-translocating NADH-quinone reductase subunit D (210 aa).

A run of 6 helical transmembrane segments spans residues 10–30, 42–62, 72–92, 103–123, 143–163, and 178–198; these read VLFG…GVCS, LVMS…ISMI, IIVQ…ILKA, VFVG…AFAM, FVLI…ILGF, and NGLL…IWFI.

Belongs to the NqrDE/RnfAE family. Composed of six subunits; NqrA, NqrB, NqrC, NqrD, NqrE and NqrF.

The protein localises to the cell inner membrane. The catalysed reaction is a ubiquinone + n Na(+)(in) + NADH + H(+) = a ubiquinol + n Na(+)(out) + NAD(+). In terms of biological role, NQR complex catalyzes the reduction of ubiquinone-1 to ubiquinol by two successive reactions, coupled with the transport of Na(+) ions from the cytoplasm to the periplasm. NqrA to NqrE are probably involved in the second step, the conversion of ubisemiquinone to ubiquinol. This Pseudoalteromonas atlantica (strain T6c / ATCC BAA-1087) protein is Na(+)-translocating NADH-quinone reductase subunit D.